The following is a 481-amino-acid chain: E3 ubiquitin-protein ligase makorin-1 (481 aa).

C3H1-type zinc fingers lie at residues 55–82 (WTKQ…HDLS), 84–111 (SPYG…HSKP), and 208–235 (ETKK…HGDS). The segment at 236–263 (CDMCGLQVLHPVDAAQRSQHIKSCIEAH) is makorin-type Cys-His. An RING-type zinc finger spans residues 281 to 335 (CGICMEVVYEKANPSERRFGILSNCNHTYCLKCIRKWRSAKQFESKIIKSCPECR). Residues 364–393 (AMSNKACRYFDEGRGSCPFGGNCFYKHAYP) form a C3H1-type 4 zinc finger.

Interacts with p53/TP53 and CDKN1A. Interacts with TERT, modulating telomere length homeostasis. In terms of processing, auto-ubiquitinated; which leads to proteasomal degradation. In terms of tissue distribution, highly expressed in embryo, in specific cell types of the central nervous system, in brain with the strongest levels of expression in the mantle layers and in testis. Moderate to low levels in somatic tissues.

It carries out the reaction S-ubiquitinyl-[E2 ubiquitin-conjugating enzyme]-L-cysteine + [acceptor protein]-L-lysine = [E2 ubiquitin-conjugating enzyme]-L-cysteine + N(6)-ubiquitinyl-[acceptor protein]-L-lysine.. It participates in protein modification; protein ubiquitination. Its function is as follows. E3 ubiquitin ligase catalyzing the covalent attachment of ubiquitin moieties onto substrate proteins. These substrates include FILIP1, p53/TP53, CDKN1A and TERT. Keeps cells alive by suppressing p53/TP53 under normal conditions, but stimulates apoptosis by repressing CDKN1A under stress conditions. Acts as a negative regulator of telomerase. Has negative and positive effects on RNA polymerase II-dependent transcription. This chain is E3 ubiquitin-protein ligase makorin-1 (Mkrn1), found in Mus musculus (Mouse).